The following is a 284-amino-acid chain: Nucleotide-binding protein SPO0713 (284 aa).

Residue 3–10 (GPSGAGRS) participates in ATP binding. 50–53 (DARN) provides a ligand contact to GTP.

Belongs to the RapZ-like family.

Its function is as follows. Displays ATPase and GTPase activities. The polypeptide is Nucleotide-binding protein SPO0713 (Ruegeria pomeroyi (strain ATCC 700808 / DSM 15171 / DSS-3) (Silicibacter pomeroyi)).